Reading from the N-terminus, the 91-residue chain is Elongation factor 1-beta (91 aa).

The protein belongs to the EF-1-beta/EF-1-delta family.

Promotes the exchange of GDP for GTP in EF-1-alpha/GDP, thus allowing the regeneration of EF-1-alpha/GTP that could then be used to form the ternary complex EF-1-alpha/GTP/AAtRNA. The protein is Elongation factor 1-beta of Saccharolobus islandicus (strain Y.N.15.51 / Yellowstone #2) (Sulfolobus islandicus).